The following is an 809-amino-acid chain: ATP-dependent RNA helicase HrpB (809 aa).

One can recognise a Helicase ATP-binding domain in the interval 14-177; it reads LTALDCAPQV…LPEAPVVISE (164 aa). Residue 27-34 participates in ATP binding; it reads APTGAGKS. Positions 123 to 126 match the DEFH box motif; that stretch reads DEFH. The Helicase C-terminal domain occupies 195-368; it reads RFDDAVAVAT…GLLMELLQWG (174 aa). The tract at residues 788 to 809 is disordered; that stretch reads PKHVWPDDPANTAPTRRTKKYS.

It belongs to the DEAD box helicase family.

The catalysed reaction is ATP + H2O = ADP + phosphate + H(+). The chain is ATP-dependent RNA helicase HrpB (hrpB) from Escherichia coli (strain K12).